Here is a 247-residue protein sequence, read N- to C-terminus: PF03932 family protein CutC (247 aa).

This sequence belongs to the CutC family.

The protein resides in the cytoplasm. This is PF03932 family protein CutC from Aliivibrio fischeri (strain MJ11) (Vibrio fischeri).